Reading from the N-terminus, the 380-residue chain is Palmitoyltransferase ZDHHC18 (380 aa).

The tract at residues 1–59 (MKDCEYQQISPGAAPPPASPGARRPGPAAPPAPSPGPAPGAPRWSGSGSGSGSLGRRPR) is disordered. The Cytoplasmic portion of the chain corresponds to 1–82 (MKDCEYQQIS…CGGRLMLAGH (82 aa)). Ser19 is modified (phosphoserine). The segment covering 27 to 40 (PAAPPAPSPGPAPG) has biased composition (pro residues). The chain crosses the membrane as a helical span at residues 83–103 (GGVFALTLLLILSTTILFFVF). The Lumenal segment spans residues 104 to 111 (DCPYLART). A helical membrane pass occupies residues 112 to 132 (LTLAIPIIAAILFFFVMSCLL). The Cytoplasmic segment spans residues 133–227 (QTSFTDPGIL…GNCVGRRNYR (95 aa)). In terms of domain architecture, DHHC spans 184–234 (KYCFTCKMFRPPRTSHCSVCDNCVERFDHHCPWVGNCVGRRNYRFFYAFIL). Cys214 acts as the S-palmitoyl cysteine intermediate in catalysis. The helical transmembrane segment at 228–248 (FFYAFILSLSFLTAFIFACVV) threads the bilayer. Topologically, residues 249–269 (THLTLLSQGSNFLSALKKTPA) are lumenal. A helical membrane pass occupies residues 270–290 (SVLELVICFFSIWSILGLSGF). Topologically, residues 291–380 (HTYLVASNLT…PDASMVGGHP (90 aa)) are cytoplasmic. Residues 355 to 380 (ALPSPIRSDDPACGAKPDASMVGGHP) are disordered.

Belongs to the DHHC palmitoyltransferase family. ERF2/ZDHHC9 subfamily. In terms of tissue distribution, ubiquitously expressed.

It is found in the golgi apparatus membrane. The catalysed reaction is L-cysteinyl-[protein] + hexadecanoyl-CoA = S-hexadecanoyl-L-cysteinyl-[protein] + CoA. In terms of biological role, palmitoyltransferase that catalyzes the addition of palmitate onto various protein substrates, such as CGAS, HRAS and LCK. Palmitoylates HRAS and LCK. Acts as a negative regulator of the cGAS-STING pathway be mediating palmitoylation and inactivation of CGAS. May also have a palmitoyltransferase activity toward the beta-2 adrenergic receptor/ADRB2 and therefore regulate G protein-coupled receptor signaling. This Mus musculus (Mouse) protein is Palmitoyltransferase ZDHHC18.